The primary structure comprises 360 residues: Protein Wnt-2 (360 aa).

The N-terminal stretch at 1–25 (MNAPLGGIWLWLPLLLTWLTPEVSS) is a signal peptide. Disulfide bonds link Cys-76–Cys-87, Cys-127–Cys-135, Cys-137–Cys-157, Cys-206–Cys-220, Cys-208–Cys-215, Cys-278–Cys-309, Cys-294–Cys-304, Cys-308–Cys-348, Cys-324–Cys-339, Cys-326–Cys-336, and Cys-331–Cys-332. Ser-212 carries the O-palmitoleoyl serine; by PORCN lipid modification. Residue Asn-295 is glycosylated (N-linked (GlcNAc...) asparagine).

Belongs to the Wnt family. Post-translationally, palmitoleoylation is required for efficient binding to frizzled receptors. Depalmitoleoylation leads to Wnt signaling pathway inhibition.

Its subcellular location is the secreted. The protein resides in the extracellular space. It is found in the extracellular matrix. In terms of biological role, ligand for members of the frizzled family of seven transmembrane receptors. Functions in the canonical Wnt signaling pathway that results in activation of transcription factors of the TCF/LEF family. Functions as a upstream regulator of FGF10 expression. Plays an important role in embryonic lung development. May contribute to embryonic brain development by regulating the proliferation of dopaminergic precursors and neurons. This Equus caballus (Horse) protein is Protein Wnt-2 (WNT2).